A 586-amino-acid polypeptide reads, in one-letter code: Alpha-1,2-mannosyltransferase MNN5 (586 aa).

An N-terminal signal peptide occupies residues 1–29; it reads MLIRLKKRKILQVIVSAVVLILFFCSVHN. N-linked (GlcNAc...) asparagine glycosylation is found at N113, N136, N259, and N264.

Belongs to the MNN1/MNT family. Glycosylated.

The protein resides in the golgi apparatus. It localises to the cis-Golgi network. The protein operates within protein modification; protein glycosylation. In terms of biological role, responsible for addition of first and second mannose residues to the outer chain of core N-linked polysaccharides and to O-linked mannotriose. Implicated in late Golgi modifications. The polypeptide is Alpha-1,2-mannosyltransferase MNN5 (MNN5) (Saccharomyces cerevisiae (strain YJM789) (Baker's yeast)).